The sequence spans 766 residues: 5-methyltetrahydropteroyltriglutamate--homocysteine methyltransferase (766 aa).

5-methyltetrahydropteroyltri-L-glutamate contacts are provided by residues 23–26 (RELK) and Lys-121. L-homocysteine is bound by residues 438–440 (IGS) and Glu-491. L-methionine contacts are provided by residues 438-440 (IGS) and Glu-491. Residues 522–523 (RC) and Trp-568 contribute to the 5-methyltetrahydropteroyltri-L-glutamate site. Asp-606 is an L-homocysteine binding site. Residue Asp-606 coordinates L-methionine. Residue Glu-612 coordinates 5-methyltetrahydropteroyltri-L-glutamate. His-648, Cys-650, and Glu-672 together coordinate Zn(2+). The active-site Proton donor is His-701. Cys-733 is a Zn(2+) binding site.

Belongs to the vitamin-B12 independent methionine synthase family. The cofactor is Zn(2+).

The enzyme catalyses 5-methyltetrahydropteroyltri-L-glutamate + L-homocysteine = tetrahydropteroyltri-L-glutamate + L-methionine. It functions in the pathway amino-acid biosynthesis; L-methionine biosynthesis via de novo pathway; L-methionine from L-homocysteine (MetE route): step 1/1. In terms of biological role, catalyzes the transfer of a methyl group from 5-methyltetrahydrofolate to homocysteine resulting in methionine formation. This chain is 5-methyltetrahydropteroyltriglutamate--homocysteine methyltransferase, found in Photobacterium profundum (strain SS9).